Consider the following 146-residue polypeptide: Hemoglobin subunit theta (146 aa).

The 145-residue stretch at 2–146 (HFTAEEKSVI…VATALAHKYH (145 aa)) folds into the Globin domain. Heme b is bound by residues histidine 63 and histidine 92.

The protein belongs to the globin family.

This chain is Hemoglobin subunit theta, found in Sus scrofa (Pig).